The chain runs to 527 residues: Ribosomal protein S6 kinase beta-1 (527 aa).

Residues 1–54 (MRRRRRRDGFYPAPDFRDREAEDMAGVFDIDLDQPEDAGSEDELEEGGQLNESM) form a disordered region. The short motif at 28-32 (FDIDL) is the TOS motif element. A compositionally biased stretch (acidic residues) spans 30-46 (IDLDQPEDAGSEDELEE). Residues 91 to 352 (FELLRVLGKG…AGEVQAHPFF (262 aa)) enclose the Protein kinase domain. ATP contacts are provided by residues 97-105 (LGKGGYGKV) and lysine 123. Catalysis depends on aspartate 218, which acts as the Proton acceptor. Threonine 252 is subject to Phosphothreonine; by PDPK1. An AGC-kinase C-terminal domain is found at 353–423 (RHINWEELLA…VAPSVLESVK (71 aa)). Serine 394 bears the Phosphoserine mark. A Phosphothreonine; by MTOR, NEK6 and NEK7 modification is found at threonine 412. The segment at 424–527 (EKFSFEPKIR…PEHLRMNLEL (104 aa)) is autoinhibitory domain. Phosphoserine occurs at positions 434 and 441. Phosphothreonine is present on threonine 444. Phosphoserine is present on residues serine 447 and serine 452. Residue lysine 516 is modified to N6-acetyllysine.

It belongs to the protein kinase superfamily. AGC Ser/Thr protein kinase family. S6 kinase subfamily. Interacts with PPP1R9A/neurabin-1. Interacts with RPTOR. Interacts with IRS1. Interacts with EIF3B and EIF3C. Interacts with TRAF4. Interacts with POLDIP3. Interacts (via N-terminus) with IER5. Phosphorylation at Thr-412 is regulated by mTORC1. The phosphorylation at this site is maintained by an agonist-dependent autophosphorylation mechanism. Activated by phosphorylation at Thr-252 by PDPK1. Dephosphorylation by PPP1CC at Thr-412 in mitochondrion.

It localises to the cytoplasm. It is found in the synapse. Its subcellular location is the synaptosome. The protein resides in the mitochondrion outer membrane. The protein localises to the mitochondrion. The catalysed reaction is L-seryl-[protein] + ATP = O-phospho-L-seryl-[protein] + ADP + H(+). The enzyme catalyses L-threonyl-[protein] + ATP = O-phospho-L-threonyl-[protein] + ADP + H(+). Its activity is regulated as follows. Inactivated by binding to URI1. Activation requires multiple phosphorylation events on serine/threonine residues. Activation appears to be first mediated by phosphorylation of multiple sites in the autoinhibitory domain, which facilitates phosphorylation at Thr-412, disrupting the autoinhibitory mechanism and allowing phosphorylation of Thr-252 by PDPK1. The active conformation of the kinase is believed to be stabilized by a mechanism involving three conserved phosphorylation sites located in the kinase domain activation loop (Thr-252) and in the AGC-kinase C-terminal domain (Ser-394 in the middle of the tail/linker region and Thr-412 within a hydrophobic motif at its end). Activated by mTORC1; isoform Alpha I and isoform Alpha II are sensitive to rapamycin, which inhibits activating phosphorylation at Thr-412. Activated by PDPK1. Functionally, serine/threonine-protein kinase that acts downstream of mTOR signaling in response to growth factors and nutrients to promote cell proliferation, cell growth and cell cycle progression. Regulates protein synthesis through phosphorylation of EIF4B, RPS6 and EEF2K, and contributes to cell survival by repressing the pro-apoptotic function of BAD. Under conditions of nutrient depletion, the inactive form associates with the EIF3 translation initiation complex. Upon mitogenic stimulation, phosphorylation by the mechanistic target of rapamycin complex 1 (mTORC1) leads to dissociation from the EIF3 complex and activation. The active form then phosphorylates and activates several substrates in the pre-initiation complex, including the EIF2B complex and the cap-binding complex component EIF4B. Also controls translation initiation by phosphorylating a negative regulator of EIF4A, PDCD4, targeting it for ubiquitination and subsequent proteolysis. Promotes initiation of the pioneer round of protein synthesis by phosphorylating POLDIP3/SKAR. In response to IGF1, activates translation elongation by phosphorylating EEF2 kinase (EEF2K), which leads to its inhibition and thus activation of EEF2. Also plays a role in feedback regulation of mTORC2 by mTORC1 by phosphorylating MAPKAP1/SIN1, MTOR and RICTOR, resulting in the inhibition of mTORC2 and AKT1 signaling. Also involved in feedback regulation of mTORC1 and mTORC2 by phosphorylating DEPTOR. Mediates cell survival by phosphorylating the pro-apoptotic protein BAD and suppressing its pro-apoptotic function. Phosphorylates mitochondrial URI1 leading to dissociation of a URI1-PPP1CC complex. The free mitochondrial PPP1CC can then dephosphorylate RPS6KB1 at Thr-412, which is proposed to be a negative feedback mechanism for the RPS6KB1 anti-apoptotic function. Mediates TNF-alpha-induced insulin resistance by phosphorylating IRS1 at multiple serine residues, resulting in accelerated degradation of IRS1. In cells lacking functional TSC1-2 complex, constitutively phosphorylates and inhibits GSK3B. May be involved in cytoskeletal rearrangement through binding to neurabin. Phosphorylates and activates the pyrimidine biosynthesis enzyme CAD, downstream of MTOR. Following activation by mTORC1, phosphorylates EPRS and thereby plays a key role in fatty acid uptake by adipocytes and also most probably in interferon-gamma-induced translation inhibition. The protein is Ribosomal protein S6 kinase beta-1 (RPS6KB1) of Bos taurus (Bovine).